A 648-amino-acid polypeptide reads, in one-letter code: 1-deoxy-D-xylulose-5-phosphate synthase (648 aa).

Residues H79 and 120-122 each bind thiamine diphosphate; that span reads GHA. D152 contacts Mg(2+). Thiamine diphosphate-binding positions include 153–154, N181, F293, and E377; that span reads GS. Residue N181 participates in Mg(2+) binding.

The protein belongs to the transketolase family. DXPS subfamily. In terms of assembly, homodimer. Requires Mg(2+) as cofactor. The cofactor is thiamine diphosphate.

The catalysed reaction is D-glyceraldehyde 3-phosphate + pyruvate + H(+) = 1-deoxy-D-xylulose 5-phosphate + CO2. Its pathway is metabolic intermediate biosynthesis; 1-deoxy-D-xylulose 5-phosphate biosynthesis; 1-deoxy-D-xylulose 5-phosphate from D-glyceraldehyde 3-phosphate and pyruvate: step 1/1. Its function is as follows. Catalyzes the acyloin condensation reaction between C atoms 2 and 3 of pyruvate and glyceraldehyde 3-phosphate to yield 1-deoxy-D-xylulose-5-phosphate (DXP). In Bacteroides fragilis (strain ATCC 25285 / DSM 2151 / CCUG 4856 / JCM 11019 / LMG 10263 / NCTC 9343 / Onslow / VPI 2553 / EN-2), this protein is 1-deoxy-D-xylulose-5-phosphate synthase.